The following is a 470-amino-acid chain: Putative multidrug resistance protein MdtD (470 aa).

Topologically, residues 1–11 (MTELPDNTRWQ) are periplasmic. The helical transmembrane segment at 12–32 (LWIVALGFFMQSLDTTIVNTA) threads the bilayer. Residues 33–48 (LPSMAKSLGESPLHMH) are Cytoplasmic-facing. A helical membrane pass occupies residues 49-69 (MVVVSYVLTVAVMLPASGWLA). Residues 70 to 76 (DKIGVRN) lie on the Periplasmic side of the membrane. Residues 77–97 (IFFAAIVLFTLGSLFCALSGT) traverse the membrane as a helical segment. The Cytoplasmic portion of the chain corresponds to 98 to 101 (LNQL). A helical membrane pass occupies residues 102–124 (VLARVLQGVGGAMMVPVGRLTVM). Topologically, residues 125 to 137 (KIVPRAQYMAAMT) are periplasmic. Residues 138 to 158 (FVTLPGQIGPLLGPALGGVLV) form a helical membrane-spanning segment. The Cytoplasmic portion of the chain corresponds to 159 to 164 (EYASWH). The chain crosses the membrane as a helical span at residues 165 to 185 (WIFLINIPVGIVGAMATFMLM). Residues 186-196 (PNYTIETRRFD) are Periplasmic-facing. Residues 197–217 (LPGFLLLAIGMAVLTLALDGS) traverse the membrane as a helical segment. Over 218-221 (KSMG) the chain is Cytoplasmic. The chain crosses the membrane as a helical span at residues 222-242 (ISPWTLAGLAAGGAAAILLYL). Topologically, residues 243–262 (LHAKKNSGALFSLRLFCTPT) are periplasmic. The chain crosses the membrane as a helical span at residues 263–283 (FSLGLLGSFAGRIGSGMLPFM). Over 284-285 (TP) the chain is Cytoplasmic. The chain crosses the membrane as a helical span at residues 286–306 (VFLQIGLGFSPFHAGLMMIPM). At 307–341 (VLGSMGMKRIVVQIVNRFGYRRVLVATTLGLALVS) the chain is on the periplasmic side. A helical membrane pass occupies residues 342–362 (LLFMSVALLGWYYLLPLVLLL). Residues 363–395 (QGMVNSARFSSMNTLTLKDLPDTLASSGNSLLS) lie on the Cytoplasmic side of the membrane. A helical transmembrane segment spans residues 396-416 (MIMQLSMSIGVTIAGMLLGMF). At 417–430 (GQQHIGIDSSATHH) the chain is on the periplasmic side. A helical transmembrane segment spans residues 431–451 (VFMYTWLCMAVIIALPAIIFA). The Cytoplasmic segment spans residues 452-470 (RVPNDTQQNMVISRRKRSL).

It belongs to the major facilitator superfamily. TCR/Tet family.

It is found in the cell inner membrane. This is Putative multidrug resistance protein MdtD from Salmonella paratyphi B (strain ATCC BAA-1250 / SPB7).